A 91-amino-acid polypeptide reads, in one-letter code: Small ribosomal subunit protein uS17 (91 aa).

The protein belongs to the universal ribosomal protein uS17 family. Part of the 30S ribosomal subunit.

Functionally, one of the primary rRNA binding proteins, it binds specifically to the 5'-end of 16S ribosomal RNA. In Salinispora arenicola (strain CNS-205), this protein is Small ribosomal subunit protein uS17.